The following is a 391-amino-acid chain: Pyridinium-3,5-bisthiocarboxylic acid mononucleotide nickel insertion protein (391 aa).

This sequence belongs to the LarC family.

The enzyme catalyses Ni(II)-pyridinium-3,5-bisthiocarboxylate mononucleotide = pyridinium-3,5-bisthiocarboxylate mononucleotide + Ni(2+). Involved in the biosynthesis of a nickel-pincer cofactor ((SCS)Ni(II) pincer complex). Binds Ni(2+), and functions in nickel delivery to pyridinium-3,5-bisthiocarboxylic acid mononucleotide (P2TMN), to form the mature cofactor. Is thus probably required for the activation of nickel-pincer cofactor-dependent enzymes. This is Pyridinium-3,5-bisthiocarboxylic acid mononucleotide nickel insertion protein from Staphylococcus saprophyticus subsp. saprophyticus (strain ATCC 15305 / DSM 20229 / NCIMB 8711 / NCTC 7292 / S-41).